The chain runs to 392 residues: Putative cystathionine gamma-lyase (392 aa).

Polar residues predominate over residues 1–10 (MSDSATTDSA). Positions 1 to 41 (MSDSATTDSAGTGGERSASAPGDGTRAVRAGLPEPVKHEPT) are disordered. N6-(pyridoxal phosphate)lysine is present on K216.

It belongs to the trans-sulfuration enzymes family. Requires pyridoxal 5'-phosphate as cofactor.

Its subcellular location is the cytoplasm. It catalyses the reaction L,L-cystathionine + H2O = 2-oxobutanoate + L-cysteine + NH4(+). It participates in amino-acid biosynthesis; L-cysteine biosynthesis; L-cysteine from L-homocysteine and L-serine: step 2/2. The protein is Putative cystathionine gamma-lyase (cysA) of Streptomyces coelicolor (strain ATCC BAA-471 / A3(2) / M145).